A 351-amino-acid chain; its full sequence is Dihydroorotate dehydrogenase (quinone) (351 aa).

FMN-binding positions include Ala61–Lys65 and Thr85. Lys65 contacts substrate. Asn110–Phe114 provides a ligand contact to substrate. 2 residues coordinate FMN: Asn139 and Asn172. Asn172 contributes to the substrate binding site. Ser175 serves as the catalytic Nucleophile. Asn177 provides a ligand contact to substrate. FMN contacts are provided by Lys217 and Thr245. Asn246–Thr247 contributes to the substrate binding site. Residues Gly268, Gly297, and Tyr318–Ser319 each bind FMN.

This sequence belongs to the dihydroorotate dehydrogenase family. Type 2 subfamily. As to quaternary structure, monomer. The cofactor is FMN.

The protein localises to the cell membrane. The catalysed reaction is (S)-dihydroorotate + a quinone = orotate + a quinol. The protein operates within pyrimidine metabolism; UMP biosynthesis via de novo pathway; orotate from (S)-dihydroorotate (quinone route): step 1/1. In terms of biological role, catalyzes the conversion of dihydroorotate to orotate with quinone as electron acceptor. The sequence is that of Dihydroorotate dehydrogenase (quinone) from Xanthomonas oryzae pv. oryzae (strain PXO99A).